The primary structure comprises 180 residues: Nucleoside triphosphate/diphosphate phosphatase (180 aa).

Arg-26 (proton donor) is an active-site residue. Mg(2+)-binding residues include Asn-90, Asp-106, Asp-108, Asp-110, Asp-123, and Glu-126.

This sequence belongs to the Ntdp family. The cofactor is Mg(2+).

The enzyme catalyses a ribonucleoside 5'-triphosphate + H2O = a ribonucleoside 5'-diphosphate + phosphate + H(+). It carries out the reaction a ribonucleoside 5'-diphosphate + H2O = a ribonucleoside 5'-phosphate + phosphate + H(+). Has nucleoside phosphatase activity towards nucleoside triphosphates and nucleoside diphosphates. This Staphylococcus aureus (strain Mu3 / ATCC 700698) protein is Nucleoside triphosphate/diphosphate phosphatase.